We begin with the raw amino-acid sequence, 104 residues long: Large ribosomal subunit protein bL21 (104 aa).

This sequence belongs to the bacterial ribosomal protein bL21 family. Part of the 50S ribosomal subunit. Contacts protein L20.

This protein binds to 23S rRNA in the presence of protein L20. This Moorella thermoacetica (strain ATCC 39073 / JCM 9320) protein is Large ribosomal subunit protein bL21.